A 423-amino-acid chain; its full sequence is Gamma-glutamyl phosphate reductase (423 aa).

It belongs to the gamma-glutamyl phosphate reductase family.

It is found in the cytoplasm. It catalyses the reaction L-glutamate 5-semialdehyde + phosphate + NADP(+) = L-glutamyl 5-phosphate + NADPH + H(+). Its pathway is amino-acid biosynthesis; L-proline biosynthesis; L-glutamate 5-semialdehyde from L-glutamate: step 2/2. Its function is as follows. Catalyzes the NADPH-dependent reduction of L-glutamate 5-phosphate into L-glutamate 5-semialdehyde and phosphate. The product spontaneously undergoes cyclization to form 1-pyrroline-5-carboxylate. The polypeptide is Gamma-glutamyl phosphate reductase (Pseudomonas entomophila (strain L48)).